The sequence spans 558 residues: uncharacterized protein (558 aa).

Residues 47–78 (DFDDLNSIFKDFQKQKKNLKDNILKFYNKKKE) adopt a coiled-coil conformation. Disordered stretches follow at residues 239-266 (NNNN…SKIE) and 424-447 (NNNN…NSGE). Basic and acidic residues predominate over residues 245 to 266 (TETESEIESKSESESESESKIE). Low complexity predominate over residues 424 to 444 (NNNNNNNNNNNNNNNNNNNNN).

This is an uncharacterized protein from Dictyostelium discoideum (Social amoeba).